Consider the following 230-residue polypeptide: Large ribosomal subunit protein uL1 (230 aa).

It belongs to the universal ribosomal protein uL1 family. As to quaternary structure, part of the 50S ribosomal subunit.

Binds directly to 23S rRNA. The L1 stalk is quite mobile in the ribosome, and is involved in E site tRNA release. In terms of biological role, protein L1 is also a translational repressor protein, it controls the translation of the L11 operon by binding to its mRNA. The polypeptide is Large ribosomal subunit protein uL1 (Afipia carboxidovorans (strain ATCC 49405 / DSM 1227 / KCTC 32145 / OM5) (Oligotropha carboxidovorans)).